A 96-amino-acid chain; its full sequence is Probable Fe(2+)-trafficking protein (96 aa).

The interval 21–40 (LPKMPHPPFPNKKGQELQET) is disordered.

It belongs to the Fe(2+)-trafficking protein family.

Its function is as follows. Could be a mediator in iron transactions between iron acquisition and iron-requiring processes, such as synthesis and/or repair of Fe-S clusters in biosynthetic enzymes. This chain is Probable Fe(2+)-trafficking protein, found in Psychrobacter arcticus (strain DSM 17307 / VKM B-2377 / 273-4).